We begin with the raw amino-acid sequence, 433 residues long: Protein translocase subunit SecY (433 aa).

10 consecutive transmembrane segments (helical) span residues 17–37, 71–91, 117–137, 141–161, 184–204, 212–232, 268–288, 310–330, 366–386, and 388–408; these read IIFT…PIPG, IFAL…LMSV, LTVL…ESMV, GPVV…TLVV, LIIF…MFEL, PLIA…IIFF, GVIP…LANF, YILL…AIVF, LTVI…LLMN, and YVIS…VVLD.

This sequence belongs to the SecY/SEC61-alpha family. As to quaternary structure, component of the Sec protein translocase complex. Heterotrimer consisting of SecY, SecE and SecG subunits. The heterotrimers can form oligomers, although 1 heterotrimer is thought to be able to translocate proteins. Interacts with the ribosome. Interacts with SecDF, and other proteins may be involved. Interacts with SecA.

It is found in the cell inner membrane. Its function is as follows. The central subunit of the protein translocation channel SecYEG. Consists of two halves formed by TMs 1-5 and 6-10. These two domains form a lateral gate at the front which open onto the bilayer between TMs 2 and 7, and are clamped together by SecE at the back. The channel is closed by both a pore ring composed of hydrophobic SecY resides and a short helix (helix 2A) on the extracellular side of the membrane which forms a plug. The plug probably moves laterally to allow the channel to open. The ring and the pore may move independently. In Rickettsia typhi (strain ATCC VR-144 / Wilmington), this protein is Protein translocase subunit SecY.